We begin with the raw amino-acid sequence, 349 residues long: Threonine-rich protein (349 aa).

Positions 1–19 (MKGLTLACIAATVVAASHA) are cleaved as a signal peptide. N257 carries an N-linked (GlcNAc...) asparagine glycan. The segment at 300-326 (QPDVSPMSVRKRRQAESAEEDDDLVGD) is disordered. Residues 316–326 (SAEEDDDLVGD) are compositionally biased toward acidic residues. Positions 316–349 (SAEEDDDLVGDMEDLKELEQEIQEALEEVEKLDV) form a coiled coil.

In terms of tissue distribution, component of the acid-insoluble and acid-soluble organic matrix of calcified layers of the shell (at protein level).

It localises to the secreted. The sequence is that of Threonine-rich protein from Lottia gigantea (Giant owl limpet).